The following is a 466-amino-acid chain: uncharacterized protein (466 aa).

One can recognise an Autotransporter domain in the interval 178-466 (SQGSASSMWM…QGMLGVKYSW (289 aa)).

This is an uncharacterized protein from Escherichia coli (strain K12).